Reading from the N-terminus, the 748-residue chain is MMKMELRLLVSLIFILCSISMLAAEENLEHDQINLMTYIVHVKKSENVASHQSEDLHSWYHSFLPQTFPHKERMVFSYRKVASGFAVKLTPEEAKSLQEKGEIVSARPERTLELHTTHTPTFLGLKQGQGLWSDDNLGKGVIIGIIDTGIFPLHPSFNDEGMPPPPAKWKGHCEFTGGQVCNNKLIGARNLVKSAIQEPPFENFFHGTHTAAEAAGRFIEDASVFGNAKGVAAGMAPNAHLAIYKVCNDKIGCTESAILAAMDIAIEDGVDVLSLSLGLGSLPFFEDPIAIGAFAATQNGVFVSCSAANSGPGYSTLSNEAPWILTVGASTIDRKIVASAKLGNGEEYEGETLFQPKDFSQQLLPLVYPGSFGYGNQTQNQSLCLPGSLKNIDLSGKVVLCDVGNVSSIVKGQEVLNSGGIAMILANSEALGFSTFAIAHVLPAVEVSYAAGLTIKSYIKSTYNPTATLIFKGTIIGDSLAPSVVYFSSRGPSQESPGILKPDIIGPGVNILAAWAVSVDNKIPAFDIVSGTSMSCPHLSGIAALIKSSHPDWSPAAIKSAIMTTANTLNLGGIPILDQRLFPADIFATGAGHVNPVKANDPGLVYDIEPEDYVPYLCGLGYSDKEIEVIVQWKVKCSNVKSIPEAQLNYPSFSILLGSDSQYYTRTLTNVGFANSTYKVELEVPLALGMSVNPSEITFTEVNEKVSFSVEFIPQIKENRRNHTFGQGSLTWVSDRHAVRIPISVIFK.

Residues 1-24 form the signal peptide; sequence MMKMELRLLVSLIFILCSISMLAA. Residues 37 to 115 form the Inhibitor I9 domain; the sequence is TYIVHVKKSE…ARPERTLELH (79 aa). The Peptidase S8 domain maps to 122–600; the sequence is FLGLKQGQGL…AGHVNPVKAN (479 aa). Active-site charge relay system residues include Asp-147 and His-206. In terms of domain architecture, PA spans 365–454; the sequence is PLVYPGSFGY…VEVSYAAGLT (90 aa). N-linked (GlcNAc...) asparagine glycans are attached at residues Asn-376, Asn-380, and Asn-405. Ser-533 serves as the catalytic Charge relay system. N-linked (GlcNAc...) asparagine glycosylation is found at Asn-675 and Asn-722.

This sequence belongs to the peptidase S8 family.

Its subcellular location is the secreted. The protein resides in the extracellular space. The protein localises to the apoplast. Functionally, required for arbuscular mycorrhiza (AM) development during AM symbiosis with AM fungi (e.g. Glomeromycota intraradices). In Medicago truncatula (Barrel medic), this protein is Subtilisin-like protease.